Consider the following 131-residue polypeptide: Glycine cleavage system H protein (131 aa).

Residues 24-106 form the Lipoyl-binding domain; sequence RVTVGISDHA…YGEGWIFVVE (83 aa). An N6-lipoyllysine modification is found at K65.

It belongs to the GcvH family. As to quaternary structure, the glycine cleavage system is composed of four proteins: P, T, L and H. (R)-lipoate serves as cofactor.

Its function is as follows. The glycine cleavage system catalyzes the degradation of glycine. The H protein shuttles the methylamine group of glycine from the P protein to the T protein. This chain is Glycine cleavage system H protein, found in Xanthomonas axonopodis pv. citri (strain 306).